Consider the following 596-residue polypeptide: uncharacterized protein (596 aa).

A helical transmembrane segment spans residues 7-26 (FWPILLGFTVLVAAGLYYVV).

The protein resides in the membrane. This is an uncharacterized protein from Sinorhizobium fredii (strain NBRC 101917 / NGR234).